Here is a 504-residue protein sequence, read N- to C-terminus: Maturase K (504 aa).

This sequence belongs to the intron maturase 2 family. MatK subfamily.

The protein resides in the plastid. Its subcellular location is the chloroplast. Functionally, usually encoded in the trnK tRNA gene intron. Probably assists in splicing its own and other chloroplast group II introns. This chain is Maturase K, found in Alliaria petiolata (Garlic mustard).